A 146-amino-acid polypeptide reads, in one-letter code: MSILDEFRSFIAKGNVMDMAVGIIIGAAFTGIVSSLVADLINPVIGLITGGIDFSNVFVNLGDGDYTSLAAAREAGAPVFAYGAFITAVINFLIIAWVVFLLVKMVNRVKETALHKSPPAAKAEPAGPTQEQLLAEIRVLLKKASA.

3 helical membrane-spanning segments follow: residues 21–41 (VGIIIGAAFTGIVSSLVADLI), 44–64 (VIGLITGGIDFSNVFVNLGDG), and 83–103 (GAFITAVINFLIIAWVVFLLV).

The protein belongs to the MscL family. As to quaternary structure, homopentamer.

The protein resides in the cell inner membrane. Channel that opens in response to stretch forces in the membrane lipid bilayer. May participate in the regulation of osmotic pressure changes within the cell. This Cereibacter sphaeroides (strain ATCC 17025 / ATH 2.4.3) (Rhodobacter sphaeroides) protein is Large-conductance mechanosensitive channel.